Reading from the N-terminus, the 783-residue chain is Transcription factor E4F1 (783 aa).

Residues 40–84 are required for ubiquitin ligase activity; sequence GFLGLPAPFSEEDEDDVHRCGRCQVEFTALEDFVQHKIQKTCHRA. Ser-49 is subject to Phosphoserine. The tract at residues 185–264 is mediates dimerization, DNA-binding, transcription repression of CCNA2 and interaction with HMGA2; it reads LLVNKEGRYV…GKSFRESGAL (80 aa). 2 consecutive C2H2-type zinc fingers follow at residues 193–215 and 221–243; these read YVCM…MVTH and HECK…HRRH. Residues 249 to 273 form a C2H2-type 3; degenerate zinc finger; it reads YKCAKCGKSFRESGALTRHLKSLTP. The tract at residues 368–565 is mediates interaction with CDKN2A; that stretch reads NLLHQAMQNS…REKGSLVRHV (198 aa). Residues 386–407 are disordered; the sequence is GEESALEPAPPSGSSPQCLGDG. 5 consecutive C2H2-type zinc fingers follow at residues 434–456, 462–484, 490–512, 518–540, and 546–568; these read HPCP…KRGH, FTCT…QEVH, FRCG…RRVH, FPCP…FRTH, and HVCQ…VRHH. The tract at residues 434-598 is interaction with BMI1; it reads HPCPQCSETF…LNRHLRTKGG (165 aa). Residues 520-579 form a mediates interaction with TP53 region; that stretch reads CPQCGKRYKTKNAQQVHFRTHLEEKPHVCQFCSRGFREKGSLVRHVRHHTGEKPFKCYKC. The C2H2-type 9; degenerate zinc finger occupies 574–596; the sequence is FKCYKCGRGFAEHGTLNRHLRTK. The mediates interaction with RASSF1 stretch occupies residues 574 to 596; the sequence is FKCYKCGRGFAEHGTLNRHLRTK.

As to quaternary structure, homodimer; binds DNA as a dimer. Forms a complex with CDKN2A and TP53. Interacts with HDAC1, HMGA2 and RASSF1. Interactions with TP53, RB1, ANP32A and probably BMI1 and FHL2 regulate E4F1 activity. Phosphorylated; phosphorylation is cell cycle-dependent and regulates DNA-binding activity and function. In terms of processing, may be sumoylated by UBE2I upon interaction with CDKN2A. In terms of tissue distribution, ubiquitously expressed.

It localises to the nucleus. The protein resides in the nucleoplasm. The protein localises to the cytoplasm. It carries out the reaction S-ubiquitinyl-[E2 ubiquitin-conjugating enzyme]-L-cysteine + [acceptor protein]-L-lysine = [E2 ubiquitin-conjugating enzyme]-L-cysteine + N(6)-ubiquitinyl-[acceptor protein]-L-lysine.. The protein operates within protein modification; protein ubiquitination. In terms of biological role, may function as a transcriptional repressor. May also function as a ubiquitin ligase mediating ubiquitination of chromatin-associated TP53. Functions in cell survival and proliferation through control of the cell cycle. Functions in the p53 and pRB tumor suppressor pathways and regulates the cyclin CCNA2 transcription. In Mus musculus (Mouse), this protein is Transcription factor E4F1 (E4f1).